We begin with the raw amino-acid sequence, 874 residues long: Probable inorganic carbon transporter subunit DabA (874 aa).

Zn(2+) contacts are provided by cysteine 398, aspartate 400, histidine 580, and cysteine 595.

This sequence belongs to the inorganic carbon transporter (TC 9.A.2) DabA family. Forms a complex with DabB. It depends on Zn(2+) as a cofactor.

The protein resides in the cell membrane. Part of an energy-coupled inorganic carbon pump. The sequence is that of Probable inorganic carbon transporter subunit DabA from Bacillus cereus (strain Q1).